A 141-amino-acid chain; its full sequence is Putative pre-16S rRNA nuclease (141 aa).

Belongs to the YqgF nuclease family.

The protein resides in the cytoplasm. In terms of biological role, could be a nuclease involved in processing of the 5'-end of pre-16S rRNA. The sequence is that of Putative pre-16S rRNA nuclease from Coxiella burnetii (strain CbuG_Q212) (Coxiella burnetii (strain Q212)).